A 270-amino-acid chain; its full sequence is Non-structural maintenance of chromosomes element 1 homolog (270 aa).

The RING-type; atypical zinc finger occupies 185-226 (CNVCRKVAIQSQLCENCGIPLHLQCAGKYFHGKANPTCPNCN). Positions 236 to 270 (LNQVSSQGPSHSQTETVRGRNQRSKNTSTASRTSR) are disordered. Polar residues-rich tracts occupy residues 237–251 (NQVS…QTET) and 259–270 (SKNTSTASRTSR).

This sequence belongs to the NSE1 family. As to quaternary structure, component of the SMC5-SMC6 complex.

It is found in the nucleus. The protein localises to the chromosome. Its subcellular location is the telomere. It carries out the reaction S-ubiquitinyl-[E2 ubiquitin-conjugating enzyme]-L-cysteine + [acceptor protein]-L-lysine = [E2 ubiquitin-conjugating enzyme]-L-cysteine + N(6)-ubiquitinyl-[acceptor protein]-L-lysine.. Functionally, RING-type zinc finger-containing E3 ubiquitin ligase that assembles with melanoma antigen protein (MAGE) to catalyze the direct transfer of ubiquitin from E2 ubiquitin-conjugating enzyme to a specific substrate. Within MAGE-RING ubiquitin ligase complex, MAGE stimulates and specifies ubiquitin ligase activity likely through recruitment and/or stabilization of the E2 ubiquitin-conjugating enzyme at the E3:substrate complex. Involved in maintenance of genome integrity, DNA damage response and DNA repair. The polypeptide is Non-structural maintenance of chromosomes element 1 homolog (nsmce1) (Xenopus laevis (African clawed frog)).